Here is a 153-residue protein sequence, read N- to C-terminus: Peptidoglycan-associated lipoprotein (153 aa).

Positions 1 to 19 are cleaved as a signal peptide; that stretch reads MNKFVKSLLVAGSVAALAA. Residue Cys20 is the site of N-palmitoyl cysteine attachment. Cys20 carries the S-diacylglycerol cysteine lipid modification. In terms of domain architecture, OmpA-like spans 40-153; it reads SVADLQQRYN…SKNRRAVLAY (114 aa). Peptidoglycan binding stretches follow at residues 55–56 and 97–101; these read FD and YNIAL.

Belongs to the Pal lipoprotein family. As to quaternary structure, the Tol-Pal system is composed of five core proteins: the inner membrane proteins TolA, TolQ and TolR, the periplasmic protein TolB and the outer membrane protein Pal. They form a network linking the inner and outer membranes and the peptidoglycan layer.

It localises to the cell outer membrane. Part of the Tol-Pal system, which plays a role in outer membrane invagination during cell division and is important for maintaining outer membrane integrity. The polypeptide is Peptidoglycan-associated lipoprotein (Haemophilus influenzae (strain ATCC 51907 / DSM 11121 / KW20 / Rd)).